Reading from the N-terminus, the 404-residue chain is Cytoplasmic 60S subunit biogenesis factor REI1 homolog 1 (404 aa).

2 C2H2-type zinc fingers span residues 4-28 (LTCN…SDWH) and 68-92 (YTCA…SRSH). Residues 119-169 (QHRGSIDDDSEDEWVEVDSDEELAAEEASDSLSKLNVNESGSAEDMDDDGD) are disordered. Acidic residues-rich tracts occupy residues 125-147 (DDDS…EEAS) and 160-169 (SAEDMDDDGD). C2H2-type zinc fingers lie at residues 178–201 (TCCL…HKHH) and 229–256 (FMCL…AKSH).

This sequence belongs to the REI1 family. In terms of assembly, can form homodimer. Interacts with RLP24, RPL24A, RPL24B, EBP1 and JJJ1.

It localises to the cytoplasm. In terms of biological role, pre-60S-associated factor involved in the cytoplasmic maturation of the 60S subunit. Involved in the dissociation and recycling of other late pre-60S factors before newly synthesized large ribosomal subunits enter translation. Can complement the growth defect of a yeast mutant lacking REI1. Required for leaf growth under cold temperature conditions. The sequence is that of Cytoplasmic 60S subunit biogenesis factor REI1 homolog 1 from Arabidopsis thaliana (Mouse-ear cress).